A 354-amino-acid chain; its full sequence is MQVGVFIPIGNNGWLISETSPQYMPSFELNKEITQKAEKYGFDFALSMIKLRGFGGKTEFWEHNLESFTLMAGLAAVTSKIKIFATVATLTIPPAIVARMASTIDSIAPGRFGVNLVTGWQKAEYSQMGLWPGEAHYTDRYNYLAEYTTVLKDLLETGVSDFKGKYFTMDDCRVSPHPKETKLICAGSSDEGLAFTAQYADYSFALGKGTNTPTAFASVNRRLEAAAAKTGRDVQSFILFMVIADETDEKAMAKWQKYRDGADQEALAWLTQQAAPNAKAGATTNTQQLAAPESAVNLNMGTLVGSYESIARMMDEIAQVPGTAGVLLTFDDFVQGVEDFGTKIQPLMKSRKGG.

FMN-binding positions include 49–50, Asn-115, Glu-124, 140–141, and Ser-189; these read IK and RY.

The protein belongs to the NtaA/SnaA/DszA monooxygenase family. RutA subfamily.

It carries out the reaction uracil + FMNH2 + NADH + O2 = (Z)-3-ureidoacrylate + FMN + NAD(+) + H2O + H(+). The enzyme catalyses thymine + FMNH2 + NADH + O2 = (Z)-2-methylureidoacrylate + FMN + NAD(+) + H2O + H(+). Its function is as follows. Catalyzes the pyrimidine ring opening between N-3 and C-4 by an unusual flavin hydroperoxide-catalyzed mechanism, adding oxygen atoms in the process to yield ureidoacrylate peracid, that immediately reacts with FMN forming ureidoacrylate and FMN-N(5)-oxide. The FMN-N(5)-oxide reacts spontaneously with NADH to produce FMN. Requires the flavin reductase RutF to regenerate FMN in vivo. The chain is Pyrimidine monooxygenase RutA (rutA) from Caulobacter vibrioides (strain ATCC 19089 / CIP 103742 / CB 15) (Caulobacter crescentus).